A 469-amino-acid polypeptide reads, in one-letter code: D-3-phosphoglycerate dehydrogenase 2 (469 aa).

N-acetylserine is present on Ser-2. A phosphoserine mark is found at Ser-22, Ser-29, and Ser-33. Residues 208-209 (HI), Asp-228, 285-287 (ASR), and Asp-311 contribute to the NAD(+) site. Residue Arg-287 is part of the active site. Glu-316 is a catalytic residue. His-347 functions as the Proton donor in the catalytic mechanism. 347 to 350 (HIGG) provides a ligand contact to NAD(+). The 71-residue stretch at 399–469 (RVLYIHRNVP…SAKVSIRLLY (71 aa)) folds into the ACT domain.

It belongs to the D-isomer specific 2-hydroxyacid dehydrogenase family.

It carries out the reaction (2R)-3-phosphoglycerate + NAD(+) = 3-phosphooxypyruvate + NADH + H(+). The catalysed reaction is (R)-2-hydroxyglutarate + NAD(+) = 2-oxoglutarate + NADH + H(+). It functions in the pathway amino-acid biosynthesis; L-serine biosynthesis; L-serine from 3-phospho-D-glycerate: step 1/3. Catalyzes the reversible oxidation of 3-phospho-D-glycerate to 3-phosphonooxypyruvate, the first step of the phosphorylated L-serine biosynthesis pathway. Also catalyzes the reversible oxidation of 2-hydroxyglutarate to 2-oxoglutarate. This is D-3-phosphoglycerate dehydrogenase 2 (SER33) from Saccharomyces cerevisiae (strain ATCC 204508 / S288c) (Baker's yeast).